The primary structure comprises 630 residues: MDEMATTQISKDELDELKEAFAKVDLNSNGFICDYELHELFKEANMPLPGYKVREIIQKLMLDGDRNKDGKISFDEFVYIFQEVKSSDIAKTFRKAINRKEGICALGGTSELSSEGTQHSYSEEEKYAFVNWINKALENDPDCRHVIPMNPNTDDLFKAVGDGIVLCKMINLSVPDTIDERAINKKKLTPFIIQENLNLALNSASAIGCHVVNIGAEDLRAGKPHLVLGLLWQIIKIGLFADIELSRNEALAALLRDGETLEELMKLSPEELLLRWANFHLENSGWQKINNFSADIKDSKAYFHLLNQIAPKGQKEGEPRIDINMSGFNETDDLKRAESMLQQADKLGCRQFVTPADVVSGNPKLNLAFVANLFNKYPALTKPENQDIDWTLLEGETREERTFRNWMNSLGVNPHVNHLYADLQDALVILQLYERIKVPVDWSKVNKPPYPKLGANMKKLENCNYAVELGKHPAKFSLVGIGGQDLNDGNQTLTLALVWQLMRRYTLNVLEDLGDGQKANDDIIVNWVNRTLSEAGKSTSIQSFKDKTISSSLAVVDLIDAIQPGCINYDLVKSGNLTEDDKHNNAKYAVSMARRIGARVYALPEDLVEVKPKMVMTVFACLMGRGMKRV.

2 consecutive EF-hand domains span residues 12-47 (DELD…ANMP) and 52-87 (KVRE…VKSS). Residues D25, N27, N29, E36, D65, N67, D69, K71, and E76 each coordinate Ca(2+). 2 actin-binding regions span residues 109–382 (TSEL…ALTK) and 383–627 (PENQ…GRGM). Calponin-homology (CH) domains lie at 123–239 (EEEK…KIGL) and 267–378 (LSPE…NKYP). S268, S293, S326, and S339 each carry phosphoserine. A Phosphothreonine modification is found at T391. 2 Calponin-homology (CH) domains span residues 397 to 506 (TREE…RRYT) and 518 to 627 (KAND…GRGM).

In terms of assembly, monomer. Expressed in a variety of organs, including muscle, brain, uterus and esophagus.

The protein resides in the cytoplasm. In terms of biological role, actin-bundling protein. This chain is Plastin-3 (PLS3), found in Homo sapiens (Human).